The primary structure comprises 189 residues: Peptidyl-tRNA hydrolase (189 aa).

Position 14 (tyrosine 14) interacts with tRNA. Histidine 19 serves as the catalytic Proton acceptor. Tyrosine 64, asparagine 66, and asparagine 112 together coordinate tRNA.

Belongs to the PTH family. Monomer.

It is found in the cytoplasm. The catalysed reaction is an N-acyl-L-alpha-aminoacyl-tRNA + H2O = an N-acyl-L-amino acid + a tRNA + H(+). In terms of biological role, hydrolyzes ribosome-free peptidyl-tRNAs (with 1 or more amino acids incorporated), which drop off the ribosome during protein synthesis, or as a result of ribosome stalling. Functionally, catalyzes the release of premature peptidyl moieties from peptidyl-tRNA molecules trapped in stalled 50S ribosomal subunits, and thus maintains levels of free tRNAs and 50S ribosomes. The polypeptide is Peptidyl-tRNA hydrolase (Clostridium botulinum (strain Loch Maree / Type A3)).